The primary structure comprises 201 residues: Hydroxymethylphosphonate dioxygenase (201 aa).

The Fe cation site is built by histidine 47, histidine 71, aspartate 72, histidine 94, histidine 117, and aspartate 174.

It depends on Fe(2+) as a cofactor.

The catalysed reaction is hydroxymethylphosphonate + O2 = formate + phosphate + 2 H(+). It carries out the reaction (1R)-(2-amino-1-hydroxyethyl)phosphonate + O2 = glycine + phosphate + 2 H(+). The enzyme catalyses (1R)-(1-hydroxyethyl)phosphonate + O2 = acetate + phosphate + 2 H(+). Functionally, part of an oxidative pathway for utilization of methylphosphonic acid as a phosphate source. Catalyzes the oxidation of hydroxymethylphosphonic acid to produce formate and phosphate. Can also use (1R)-(2-amino-1-hydroxyethyl)phosphonic acid and (R)-1-hydroxyethylphosphonic acid with similar catalytic efficiency. This chain is Hydroxymethylphosphonate dioxygenase, found in Gimesia maris (strain ATCC 29201 / DSM 8797 / 534-30) (Planctomyces maris).